An 880-amino-acid polypeptide reads, in one-letter code: GAS2-like protein 2 (880 aa).

Residues 32 to 159 (EAMKEDLAEW…CLLELGRRAW (128 aa)) enclose the Calponin-homology (CH) domain. A disordered region spans residues 180-200 (RRELALPPPDPSPPAPPRRQP). The span at 185–198 (LPPPDPSPPAPPRR) shows a compositional bias: pro residues. One can recognise a GAR domain in the interval 201–273 (CHFRNLDQMV…HYLDKHDPCR (73 aa)). Disordered stretches follow at residues 283 to 360 (SFLK…MAPF), 372 to 437 (WRQP…NPTP), 489 to 533 (ESVR…ELGR), and 676 to 880 (APTG…ESWV). Residues 301 to 315 (GPSQTQPTMTISRSQ) are compositionally biased toward polar residues. The tract at residues 438-880 (QRLRAIEATT…PLPPEEESWV (443 aa)) is interaction with ADORA2A. Positions 506–515 (RLPPARPPTP) are enriched in pro residues. Positions 725–734 (QDCSASTVSA) are enriched in polar residues. 2 stretches are compositionally biased toward basic residues: residues 757–767 (KGRRTLRKPKR) and 774–785 (LKLRPRIRPRRD).

It belongs to the GAS2 family. Interacts with ADORA2A (via its cytoplasmic C-terminal domain). Interacts with GNAS, GNAL, GNAQ, and GNA13. Interacts with MAPRE1. As to expression, expressed in bronchial and nasal epithelial cells (at protein level). Expressed in brain, kidney, lung, testis, fallopian tubes, and skeletal muscle. Expressed at low levels in stomach and colon.

The protein localises to the cytoplasm. The protein resides in the cytoskeleton. It localises to the cell membrane. It is found in the stress fiber. Its subcellular location is the cilium basal body. In terms of biological role, involved in the cross-linking of microtubules and microfilaments. Regulates microtubule dynamics and stability by interacting with microtubule plus-end tracking proteins, such as MAPRE1, to regulate microtubule growth along actin stress fibers. Enhances ADORA2-mediated adenylyl cyclase activation by acting as a scaffold to recruit trimeric G-protein complexes to ADORA2A. Regulates ciliary orientation and performance in cells located in the airway. This is GAS2-like protein 2 (GAS2L2) from Homo sapiens (Human).